Reading from the N-terminus, the 284-residue chain is Bifunctional protein FolD (284 aa).

NADP(+) is bound by residues 165–167, S190, and V231; that span reads GRS.

The protein belongs to the tetrahydrofolate dehydrogenase/cyclohydrolase family. Homodimer.

The enzyme catalyses (6R)-5,10-methylene-5,6,7,8-tetrahydrofolate + NADP(+) = (6R)-5,10-methenyltetrahydrofolate + NADPH. The catalysed reaction is (6R)-5,10-methenyltetrahydrofolate + H2O = (6R)-10-formyltetrahydrofolate + H(+). Its pathway is one-carbon metabolism; tetrahydrofolate interconversion. In terms of biological role, catalyzes the oxidation of 5,10-methylenetetrahydrofolate to 5,10-methenyltetrahydrofolate and then the hydrolysis of 5,10-methenyltetrahydrofolate to 10-formyltetrahydrofolate. The protein is Bifunctional protein FolD of Ruminiclostridium cellulolyticum (strain ATCC 35319 / DSM 5812 / JCM 6584 / H10) (Clostridium cellulolyticum).